The chain runs to 394 residues: GPI transamidase component GAB1 (394 aa).

Residues 1-135 lie on the Cytoplasmic side of the membrane; the sequence is MDSTALKVAL…TLLSCISRSS (135 aa). A helical membrane pass occupies residues 136–156; the sequence is IIFTNFAISSSLYCILAEGNV. Topologically, residues 157-160 are lumenal; sequence LLSS. The chain crosses the membrane as a helical span at residues 161–181; the sequence is VMISISGYLSVYPILLLIPLL. The Cytoplasmic portion of the chain corresponds to 182–190; that stretch reads GMLKSWRQR. A helical membrane pass occupies residues 191-211; the sequence is ILSAIVSILSLLILLLFSYSI. The Lumenal segment spans residues 212-224; sequence LGSQSWSFLTQVY. Residues 225-245 traverse the membrane as a helical segment; that stretch reads GSIITFEKVFPNLGLWWYFFI. Residues 235-255 are may be involved in recognition of long-chain fatty acids in GPI; the sequence is PNLGLWWYFFIEMFDTFIPFF. Over 246-250 the chain is Cytoplasmic; the sequence is EMFDT. Residues 251–271 traverse the membrane as a helical segment; the sequence is FIPFFKAVFNIFIAVFITPFT. The Lumenal portion of the chain corresponds to 272–297; that stretch reads LRYHKQPFYAFILCIGWIVLTKPYPS. Residues 298–318 form a helical membrane-spanning segment; the sequence is LGDAGFFFSFLPFFTPLFGYL. The Cytoplasmic portion of the chain corresponds to 319-324; it reads RYPIIS. Residues 325–345 form a helical membrane-spanning segment; the sequence is ALLFLHAIVLAPIFYHLWVVL. The Lumenal portion of the chain corresponds to 346-351; sequence GSGNSN. A helical transmembrane segment spans residues 352–372; sequence FFYAISLVYALAIASILVDLN. Over 373–394 the chain is Cytoplasmic; the sequence is WAMLRIEYDNGIPNFKLKVTQI.

This sequence belongs to the PIGU family. Forms a complex with GPI16, GPI17, GPI8 and GAA1.

It localises to the endoplasmic reticulum membrane. It functions in the pathway glycolipid biosynthesis; glycosylphosphatidylinositol-anchor biosynthesis. Functionally, component of the GPI transamidase complex. May be involved in the recognition of either the GPI attachment signal or the lipid portion of GPI. This chain is GPI transamidase component GAB1 (GAB1), found in Saccharomyces cerevisiae (strain ATCC 204508 / S288c) (Baker's yeast).